We begin with the raw amino-acid sequence, 512 residues long: ATP synthase subunit alpha (512 aa).

ATP is bound at residue 169–176 (GDRKTGKT).

Belongs to the ATPase alpha/beta chains family. As to quaternary structure, F-type ATPases have 2 components, CF(1) - the catalytic core - and CF(0) - the membrane proton channel. CF(1) has five subunits: alpha(3), beta(3), gamma(1), delta(1), epsilon(1). CF(0) has three main subunits: a(1), b(2) and c(9-12). The alpha and beta chains form an alternating ring which encloses part of the gamma chain. CF(1) is attached to CF(0) by a central stalk formed by the gamma and epsilon chains, while a peripheral stalk is formed by the delta and b chains.

It localises to the cell membrane. It carries out the reaction ATP + H2O + 4 H(+)(in) = ADP + phosphate + 5 H(+)(out). Produces ATP from ADP in the presence of a proton gradient across the membrane. The alpha chain is a regulatory subunit. This is ATP synthase subunit alpha from Limosilactobacillus fermentum (strain NBRC 3956 / LMG 18251) (Lactobacillus fermentum).